Consider the following 48-residue polypeptide: Small polypeptide DEVIL 22 (48 aa).

The chain crosses the membrane as a helical span at residues Lys-7–Lys-23. Residues Ala-13–Ile-44 form a required for DVL/RTFL small polypeptide activity region.

The protein belongs to the DVL/RTFL small polypeptides family.

The protein resides in the cell membrane. Its function is as follows. Small polypeptide acting as a regulatory molecule which coordinates cellular responses required for differentiation, growth and development, probably by restricting polar cell proliferation in lateral organs and coordinating socket cell recruitment and differentiation at trichome sites. The protein is Small polypeptide DEVIL 22 of Arabidopsis thaliana (Mouse-ear cress).